Consider the following 227-residue polypeptide: Cytochrome c oxidase subunit 2 (227 aa).

Over 1-14 (MAYPFQLGFQDASS) the chain is Mitochondrial intermembrane. Residues 15 to 45 (PIMEELLHFHDHTLMIVFLISSLVLYIISLM) form a helical membrane-spanning segment. The Mitochondrial matrix segment spans residues 46–59 (LTTKLTHTSTMDAQ). Residues 60-87 (EVETIWTILPAIILILIALPSLRILYMM) traverse the membrane as a helical segment. The Mitochondrial intermembrane segment spans residues 88–227 (DEINNPSLTV…HFENWSLSMI (140 aa)). Residues His161, Cys196, Glu198, Cys200, His204, and Met207 each coordinate Cu cation. Glu198 serves as a coordination point for Mg(2+).

This sequence belongs to the cytochrome c oxidase subunit 2 family. As to quaternary structure, component of the cytochrome c oxidase (complex IV, CIV), a multisubunit enzyme composed of 14 subunits. The complex is composed of a catalytic core of 3 subunits MT-CO1, MT-CO2 and MT-CO3, encoded in the mitochondrial DNA, and 11 supernumerary subunits COX4I, COX5A, COX5B, COX6A, COX6B, COX6C, COX7A, COX7B, COX7C, COX8 and NDUFA4, which are encoded in the nuclear genome. The complex exists as a monomer or a dimer and forms supercomplexes (SCs) in the inner mitochondrial membrane with NADH-ubiquinone oxidoreductase (complex I, CI) and ubiquinol-cytochrome c oxidoreductase (cytochrome b-c1 complex, complex III, CIII), resulting in different assemblies (supercomplex SCI(1)III(2)IV(1) and megacomplex MCI(2)III(2)IV(2)). Found in a complex with TMEM177, COA6, COX18, COX20, SCO1 and SCO2. Interacts with TMEM177 in a COX20-dependent manner. Interacts with COX20. Interacts with COX16. Requires Cu cation as cofactor.

The protein resides in the mitochondrion inner membrane. The catalysed reaction is 4 Fe(II)-[cytochrome c] + O2 + 8 H(+)(in) = 4 Fe(III)-[cytochrome c] + 2 H2O + 4 H(+)(out). Component of the cytochrome c oxidase, the last enzyme in the mitochondrial electron transport chain which drives oxidative phosphorylation. The respiratory chain contains 3 multisubunit complexes succinate dehydrogenase (complex II, CII), ubiquinol-cytochrome c oxidoreductase (cytochrome b-c1 complex, complex III, CIII) and cytochrome c oxidase (complex IV, CIV), that cooperate to transfer electrons derived from NADH and succinate to molecular oxygen, creating an electrochemical gradient over the inner membrane that drives transmembrane transport and the ATP synthase. Cytochrome c oxidase is the component of the respiratory chain that catalyzes the reduction of oxygen to water. Electrons originating from reduced cytochrome c in the intermembrane space (IMS) are transferred via the dinuclear copper A center (CU(A)) of subunit 2 and heme A of subunit 1 to the active site in subunit 1, a binuclear center (BNC) formed by heme A3 and copper B (CU(B)). The BNC reduces molecular oxygen to 2 water molecules using 4 electrons from cytochrome c in the IMS and 4 protons from the mitochondrial matrix. The chain is Cytochrome c oxidase subunit 2 (MT-CO2) from Oryctolagus cuniculus (Rabbit).